Reading from the N-terminus, the 816-residue chain is Leucine--tRNA ligase (816 aa).

The short motif at 46-56 is the 'HIGH' region element; it reads PYPSGALHMGH. Residues 638–642 carry the 'KMSKS' region motif; that stretch reads KMSKS. Residue K641 participates in ATP binding.

It belongs to the class-I aminoacyl-tRNA synthetase family.

It is found in the cytoplasm. It carries out the reaction tRNA(Leu) + L-leucine + ATP = L-leucyl-tRNA(Leu) + AMP + diphosphate. The sequence is that of Leucine--tRNA ligase from Xanthomonas campestris pv. campestris (strain ATCC 33913 / DSM 3586 / NCPPB 528 / LMG 568 / P 25).